Consider the following 300-residue polypeptide: Ribosomal protein bS6--L-glutamate ligase (300 aa).

An ATP-grasp domain is found at 104 to 287; sequence MQLLARQGID…IAGKMIRWIE (184 aa). ATP is bound by residues K141, 178-179, D187, and 211-213; these read EY and RSN. D248, E260, and N262 together coordinate Mg(2+). The Mn(2+) site is built by D248, E260, and N262.

Belongs to the RimK family. Mg(2+) serves as cofactor. Mn(2+) is required as a cofactor.

In terms of biological role, an L-glutamate ligase that catalyzes the ATP-dependent post-translational addition of glutamate residues to the C-terminus of ribosomal protein bS6 (RpsF). Is also able to catalyze the synthesis of poly-alpha-glutamate in vitro, via ATP hydrolysis from unprotected glutamate as substrate. The number of glutamate residues added to either RpsF or to poly-alpha-glutamate changes with pH. The polypeptide is Ribosomal protein bS6--L-glutamate ligase (Shigella boydii serotype 18 (strain CDC 3083-94 / BS512)).